The sequence spans 33 residues: Photosystem II reaction center protein Psb30 (33 aa).

Residues 5–25 (LALTLVSLVLVVSAGPLVVVL) form a helical membrane-spanning segment.

This sequence belongs to the Psb30/Ycf12 family. In terms of assembly, PSII is composed of 1 copy each of membrane proteins PsbA, PsbB, PsbC, PsbD, PsbE, PsbF, PsbH, PsbI, PsbJ, PsbK, PsbL, PsbM, PsbT, PsbX, PsbY, PsbZ, Psb30/Ycf12, peripheral proteins of the oxygen-evolving complex and a large number of cofactors. It forms dimeric complexes.

The protein localises to the plastid. Its subcellular location is the chloroplast thylakoid membrane. A core subunit of photosystem II (PSII), required for optimal photosynthesis, probably helps stabilize the reaction center. In Chlamydomonas reinhardtii (Chlamydomonas smithii), this protein is Photosystem II reaction center protein Psb30.